We begin with the raw amino-acid sequence, 619 residues long: Very-long-chain aldehyde decarbonylase GL1-4 (619 aa).

5 consecutive transmembrane segments (helical) span residues 45–65 (IAFSLILPSLLLRMIHNQIWI), 94–114 (GWDDQILFNGLVFYAGYLAMP), 126–146 (GAVVTALVHTGPVEFLYYWFH), 178–198 (FAEHVVYFILFAIPILSTIYL), and 325–345 (AWYMWTLWPLAWLSMVLAWIY). In terms of domain architecture, Fatty acid hydroxylase spans 138–272 (VEFLYYWFHR…MPFYDYIYNT (135 aa)).

Belongs to the sterol desaturase family. As to quaternary structure, homodimer.

It localises to the endoplasmic reticulum membrane. The enzyme catalyses a long-chain fatty aldehyde + 2 NADPH + O2 + H(+) = a long-chain alkane + formate + 2 NADP(+) + H2O. In terms of biological role, aldehyde decarbonylase involved in the conversion of aldehydes to alkanes. Core component of a very-long-chain alkane synthesis complex. This is Very-long-chain aldehyde decarbonylase GL1-4 from Oryza sativa subsp. indica (Rice).